A 459-amino-acid polypeptide reads, in one-letter code: Argininosuccinate lyase (459 aa).

The protein belongs to the lyase 1 family. Argininosuccinate lyase subfamily.

Its subcellular location is the cytoplasm. It carries out the reaction 2-(N(omega)-L-arginino)succinate = fumarate + L-arginine. Its pathway is amino-acid biosynthesis; L-arginine biosynthesis; L-arginine from L-ornithine and carbamoyl phosphate: step 3/3. The protein is Argininosuccinate lyase of Buchnera aphidicola subsp. Schizaphis graminum (strain Sg).